Consider the following 433-residue polypeptide: Polygalacturonase ADPG2 (433 aa).

The N-terminal stretch at 1 to 24 (MARCTNLVTVFLLWALLMFSWCKA) is a signal peptide. PbH1 repeat units lie at residues 223–249 (CSNVQVSNVVVTAPADSPNTDGIHITN), 250–271 (TQNIRVSESIIGTGDDCISIES), 273–293 (SQNVQINDITCGPGHGISIGS), 303–324 (VSGVTVDGAKLSGTDNGVRIKT), and 332–353 (ASNIIFQNIQMDNVKNPIIIDQ). Catalysis depends on D264, which acts as the Proton donor. The active site involves H287.

The protein belongs to the glycosyl hydrolase 28 family. In terms of tissue distribution, expressed in roots and in the abscission zone of the sepals, petals and stamens of flowers, at the base of cauline leaves and in the basal cell of trichomes from senescing leaves. Found at the site of lateral root emergence, in the dehiscence zone of anthers and maturing siliques. Also expressed early in anther development, at the time of microspore separation. Expressed in germinating seeds, at the point at which the radicle broke through the seed coat. Not expressed at the junction between the seed and the funiculus or in the dehiscence zone of anthers or pods.

Its subcellular location is the secreted. The protein resides in the cell wall. It catalyses the reaction (1,4-alpha-D-galacturonosyl)n+m + H2O = (1,4-alpha-D-galacturonosyl)n + (1,4-alpha-D-galacturonosyl)m.. Functionally, polygalacturonase involved in cell separation in the final stages of pod shatter, in anther dehiscence and in floral organ abscission. The chain is Polygalacturonase ADPG2 (ADPG2) from Arabidopsis thaliana (Mouse-ear cress).